The primary structure comprises 1295 residues: DNA (cytosine-5)-methyltransferase CMT2 (1295 aa).

3 disordered regions span residues 1–23 (MLSPAKCESEEAQAPLDLHSSSR), 61–91 (RRSTTLNCNSPEENGGEGRVSQRKSSRGKSQ), and 249–287 (NSSKQSLGSNKRMRRSQRFMKGTENEGEENLGKSKGKGM). The segment covering 61-72 (RRSTTLNCNSPE) has biased composition (polar residues). The BAH domain occupies 578–693 (HTFSLGDFAY…VEYSTFQTLR (116 aa)). The region spanning 727-1268 (LPVLDLYSGC…YSLGMAFRGL (542 aa)) is the SAM-dependent MTase C5-type domain. The disordered stretch occupies residues 814–835 (SVNSTKETSGSSSSSDDDSDSE). The 66-residue stretch at 837-902 (YEVEKLVDIC…SGFKSKILPL (66 aa)) folds into the Chromo domain. Cys915 is an active-site residue.

The protein belongs to the class I-like SAM-binding methyltransferase superfamily. C5-methyltransferase family.

It localises to the nucleus. It carries out the reaction a 2'-deoxycytidine in DNA + S-adenosyl-L-methionine = a 5-methyl-2'-deoxycytidine in DNA + S-adenosyl-L-homocysteine + H(+). Functionally, may be involved in the CpXpG methylation and in gene silencing. The polypeptide is DNA (cytosine-5)-methyltransferase CMT2 (CMT2) (Arabidopsis thaliana (Mouse-ear cress)).